A 637-amino-acid chain; its full sequence is 1-deoxy-D-xylulose-5-phosphate synthase (637 aa).

Residues histidine 76 and 117–119 (AHS) each bind thiamine diphosphate. Aspartate 148 provides a ligand contact to Mg(2+). Thiamine diphosphate contacts are provided by residues 149-150 (GA), asparagine 177, tyrosine 287, and glutamate 369. Asparagine 177 is a binding site for Mg(2+).

This sequence belongs to the transketolase family. DXPS subfamily. In terms of assembly, homodimer. Mg(2+) serves as cofactor. Thiamine diphosphate is required as a cofactor.

It carries out the reaction D-glyceraldehyde 3-phosphate + pyruvate + H(+) = 1-deoxy-D-xylulose 5-phosphate + CO2. The protein operates within metabolic intermediate biosynthesis; 1-deoxy-D-xylulose 5-phosphate biosynthesis; 1-deoxy-D-xylulose 5-phosphate from D-glyceraldehyde 3-phosphate and pyruvate: step 1/1. Functionally, catalyzes the acyloin condensation reaction between C atoms 2 and 3 of pyruvate and glyceraldehyde 3-phosphate to yield 1-deoxy-D-xylulose-5-phosphate (DXP). This is 1-deoxy-D-xylulose-5-phosphate synthase from Pelagibacter ubique (strain HTCC1062).